The primary structure comprises 490 residues: Metalloreductase STEAP2 (490 aa).

NADP(+) is bound by residues 38–41 (SGDF), 60–61 (SR), 93–100 (IHREHYTS), asparagine 118, and alanine 151. Positions 152 and 160 each coordinate FAD. Residues 208–228 (LFTLWRGPVVVAISLATFFFL) traverse the membrane as a helical segment. Tyrosine 229 lines the Fe(3+) pocket. A helical membrane pass occupies residues 259–279 (LPIVAITLLSLVYLAGLLAAA). The Ferric oxidoreductase domain occupies 259–407 (LPIVAITLLS…LGYVALLIST (149 aa)). FAD is bound by residues glutamine 281 and arginine 302. A run of 4 helical transmembrane segments spans residues 305-325 (LGLL…CLPM), 359-379 (MYIS…VTSI), 393-413 (FIQS…VLIY), and 432-452 (FVLA…LFLP). Histidine 316 serves as a coordination point for heme b. Tyrosine 319 is a Fe(3+) binding site. Residues serine 378 and glutamine 395 each contribute to the FAD site. Histidine 409 contributes to the heme b binding site. Serine 483 carries the phosphoserine modification.

It belongs to the STEAP family. FAD serves as cofactor. It depends on heme b as a cofactor. As to expression, expressed at high levels in prostate and at significantly lower levels in heart, brain, kidney, pancreas, and ovary.

The protein resides in the endosome membrane. It is found in the cell membrane. The enzyme catalyses 2 Fe(2+) + NADP(+) + H(+) = 2 Fe(3+) + NADPH. It carries out the reaction 2 Cu(+) + NADP(+) + H(+) = 2 Cu(2+) + NADPH. Functionally, integral membrane protein that functions as a NADPH-dependent ferric-chelate reductase, using NADPH from one side of the membrane to reduce a Fe(3+) chelate that is bound on the other side of the membrane. Mediates sequential transmembrane electron transfer from NADPH to FAD and onto heme, and finally to the Fe(3+) chelate. Can also reduce Cu(2+) to Cu(1+). The chain is Metalloreductase STEAP2 (STEAP2) from Homo sapiens (Human).